The primary structure comprises 153 residues: Large ribosomal subunit protein uL15 (153 aa).

A disordered region spans residues 21–40 (RGIGSGKGKTGGRGIKGQKS). Positions 23–35 (IGSGKGKTGGRGI) are enriched in gly residues.

This sequence belongs to the universal ribosomal protein uL15 family. As to quaternary structure, part of the 50S ribosomal subunit.

Functionally, binds to the 23S rRNA. This chain is Large ribosomal subunit protein uL15, found in Rickettsia canadensis (strain McKiel).